The chain runs to 217 residues: Ras-related protein RABA2a (217 aa).

Position 19-26 (19-26 (GDSGVGKS)) interacts with GTP. The short motif at 41–49 (SKSTIGVEF) is the Effector region element. GTP is bound by residues 67-71 (DTAGQ), 125-128 (NKTD), and 155-156 (SA). Cysteine 213 carries S-palmitoyl cysteine lipidation. Cysteine methyl ester is present on cysteine 214. Cysteine 214 carries the S-geranylgeranyl cysteine lipid modification. Positions 215 to 217 (SSS) are cleaved as a propeptide — removed in mature form.

Belongs to the small GTPase superfamily. Rab family. As to expression, expressed in root tips.

It localises to the endosome membrane. The protein resides in the golgi apparatus. It is found in the trans-Golgi network membrane. In terms of biological role, intracellular vesicle trafficking and protein transport. The sequence is that of Ras-related protein RABA2a (RABA2A) from Arabidopsis thaliana (Mouse-ear cress).